Consider the following 449-residue polypeptide: Hyaluronidase-1 (449 aa).

Positions 1–23 (MYHIWIKFLAAWIFLKRFNGVHV) are cleaved as a signal peptide. Disulfide bonds link Cys-47–Cys-340 and Cys-211–Cys-227. N-linked (GlcNAc...) asparagine glycans are attached at residues Asn-67, Asn-103, and Asn-111. Residue Glu-135 is the Proton donor of the active site. N-linked (GlcNAc...) asparagine glycosylation is present at Asn-153. Residue Asn-357 is glycosylated (N-linked (GlcNAc...) asparagine). Intrachain disulfides connect Cys-365/Cys-376, Cys-370/Cys-427, and Cys-429/Cys-438. Residue Asn-401 is glycosylated (N-linked (GlcNAc...) asparagine). The region spanning 427 to 438 (CQCYQGWKGLYC) is the EGF-like domain.

This sequence belongs to the glycosyl hydrolase 56 family. As to quaternary structure, monomer. In terms of tissue distribution, expressed by the venom gland.

The protein localises to the secreted. It catalyses the reaction Random hydrolysis of (1-&gt;4)-linkages between N-acetyl-beta-D-glucosamine and D-glucuronate residues in hyaluronate.. Functionally, snake venom endo-hyaluronidase that degrades hyaluronan to smaller oligosaccharide fragments. In venom, it is not toxic by itself, but increases the diffusion of other venom proteins by degrading the extracellular matrix. In addition, it displays antiedematogenic activity. This is Hyaluronidase-1 from Cerastes cerastes (Horned desert viper).